We begin with the raw amino-acid sequence, 255 residues long: Myogenic factor 5 (255 aa).

The bHLH domain maps to 83 to 134; it reads DRRKAATMRERRRLKKVNQAFETLKRCTTTNPNQRLPKVEILRNAIQYIESL. The segment covering 221–242 has biased composition (low complexity); it reads SLPIPDSITPSPTSSTDSLPRS. Residues 221–246 are disordered; that stretch reads SLPIPDSITPSPTSSTDSLPRSPDAH.

Efficient DNA binding requires dimerization with another bHLH protein.

Its subcellular location is the nucleus. Its function is as follows. Acts as a transcriptional activator that promotes transcription of muscle-specific target genes and plays a role in muscle differentiation. Induces fibroblasts to differentiate into myoblasts. Probable sequence specific DNA-binding protein. This is Myogenic factor 5 (myf5) from Xenopus laevis (African clawed frog).